Here is a 1141-residue protein sequence, read N- to C-terminus: cGMP-inhibited 3',5'-cyclic phosphodiesterase 3A (1141 aa).

The disordered stretch occupies residues 1 to 42; that stretch reads MAVRGEAAQDLAKPGLGGASPARVARGNHRHRGESSPSPRGS. A helical membrane pass occupies residues 62-82; sequence SALCAGSLSVLLALLVRLVGG. Positions 90 to 111 are disordered; sequence KSQEAAAEEEEEEGARGGVFPG. Helical transmembrane passes span 127-147, 157-177, 182-202, 207-227, and 229-249; these read LQPA…GLCL, AVAL…SLGV, LLSL…TWLV, LGVL…VSLE, and FKVA…LLLA. A Phosphoserine modification is found at serine 310. A compositionally biased stretch (low complexity) spans 433-445; sequence RVSSTWTTTTSAT. The tract at residues 433-483 is disordered; it reads RVSSTWTTTTSATGLPTLEPAPVRRDRSASIKPHEAPSPSAVNPDSWNAPG. Basic and acidic residues predominate over residues 454-467; the sequence is PVRRDRSASIKPHE. The segment covering 472–483 has biased composition (polar residues); sequence SAVNPDSWNAPG. Phosphoserine is present on residues serine 492, serine 520, serine 524, and serine 533. Residues 505 to 654 are disordered; that stretch reads VKAKKQNRPG…CQREPQRKAS (150 aa). Residues 522-532 show a composition bias toward pro residues; that stretch reads VPSPSSSPPQG. Residues 533–544 show a composition bias toward low complexity; it reads SPASSPVSNSAS. Positions 618 to 637 are enriched in polar residues; it reads TSQVTSDYETNNNSDSSDIL. The interval 669 to 1141 is interaction with SLFN12; it reads KPILAPEPLV…EETLAPQPDL (473 aa). The region spanning 674–1093 is the PDEase domain; the sequence is PEPLVMDNLD…MMWKKVIEEE (420 aa). Histidine 752 serves as the catalytic Proton donor. Histidine 752 contributes to the AMP binding site. Positions 756, 836, 837, and 950 each coordinate Mn(2+). AMP contacts are provided by aspartate 837, aspartate 950, and glutamine 1001. Aspartate 837 contacts Mg(2+). Disordered stretches follow at residues 1024–1060 and 1120–1141; these read GKWV…SSIA and KEEE…QPDL. Positions 1029 to 1046 are enriched in acidic residues; it reads DSDDSGDTDDPEEEEEEA. Serine 1033 is modified (phosphoserine). Threonine 1036 is modified (phosphothreonine). Residue lysine 1120 forms a Glycyl lysine isopeptide (Lys-Gly) (interchain with G-Cter in SUMO2) linkage.

This sequence belongs to the cyclic nucleotide phosphodiesterase family. PDE3 subfamily. Mn(2+) is required as a cofactor. Mg(2+) serves as cofactor.

It is found in the membrane. Its subcellular location is the cytoplasm. The protein resides in the cytosol. It carries out the reaction a nucleoside 3',5'-cyclic phosphate + H2O = a nucleoside 5'-phosphate + H(+). It catalyses the reaction 3',5'-cyclic AMP + H2O = AMP + H(+). The catalysed reaction is 3',5'-cyclic GMP + H2O = GMP + H(+). The enzyme catalyses 3',5'-cyclic UMP + H2O = UMP + H(+). With respect to regulation, inhibited by cGMP. Its function is as follows. Cyclic nucleotide phosphodiesterase with specificity for the second messengers cAMP and cGMP, which are key regulators of many important physiological processes. Also has activity toward cUMP. Independently of its catalytic activity it is part of an E2/17beta-estradiol-induced pro-apoptotic signaling pathway. E2 stabilizes the PDE3A/SLFN12 complex in the cytosol, promoting the dephosphorylation of SLFN12 and activating its pro-apoptotic ribosomal RNA/rRNA ribonuclease activity. This apoptotic pathway might be relevant in tissues with high concentration of E2 and be for instance involved in placenta remodeling. This Mus musculus (Mouse) protein is cGMP-inhibited 3',5'-cyclic phosphodiesterase 3A.